The chain runs to 314 residues: Malate dehydrogenase (314 aa).

NAD(+) is bound by residues 11–16 (GSGNIG) and Asp35. 2 residues coordinate substrate: Arg84 and Arg90. Residues Asn97 and 120-122 (ITN) each bind NAD(+). Substrate is bound by residues Asn122 and Arg153. Residue His177 is the Proton acceptor of the active site.

This sequence belongs to the LDH/MDH superfamily. MDH type 3 family.

It catalyses the reaction (S)-malate + NAD(+) = oxaloacetate + NADH + H(+). Functionally, catalyzes the reversible oxidation of malate to oxaloacetate. This is Malate dehydrogenase from Rickettsia africae (strain ESF-5).